Here is a 624-residue protein sequence, read N- to C-terminus: Prickle planar cell polarity protein 3 (624 aa).

Basic residues predominate over residues 1 to 12; it reads MFARGSRRRRSG. The disordered stretch occupies residues 1 to 26; it reads MFARGSRRRRSGRAPPEAEDPARGQP. The PET domain maps to 74 to 182; it reads SDFQRHSISD…TVRIFPVTIT (109 aa). LIM zinc-binding domains follow at residues 184–249, 250–309, and 310–373; these read AICE…CLRP, RCQA…RHAE, and YCDG…SETT. The disordered stretch occupies residues 371–617; that stretch reads ETTAPGPGRR…SHPVMPRQTR (247 aa). Positions 383-409 are enriched in low complexity; the sequence is SAGTVTTPLTTSTASFSATEGTSETAS. Over residues 447–458 the composition is skewed to pro residues; it reads PEPPTESPGHPA. Phosphoserine is present on residues Ser-475 and Ser-491. Positions 509 to 541 are enriched in basic residues; that stretch reads SCHHHHHHRRRRQRHRRRGSHHHHHHPGRHGHH. The span at 545–564 shows a compositional bias: low complexity; the sequence is LGSGSDSGSCSSSPSSPSSE. Positions 587 to 601 are enriched in polar residues; sequence RTTQDTSTETFNSPA.

The protein belongs to the prickle / espinas / testin family. In terms of assembly, interacts with VANGL2 via its C-terminus. The VANGL2-dependent membrane recruitment of PRICKLE3 is a prerequisite for its polarization. Interacts with WTIP. WTIP is involved in the recruitment of PRICKLE3 to the basal body. Interacts with MT-ATP8, a component of the mitochondrial complex V. In terms of tissue distribution, widely expressed.

It is found in the cytoplasm. The protein localises to the cell membrane. It localises to the mitochondrion. In terms of biological role, involved in the planar cell polarity (PCP) pathway that is essential for the polarization of epithelial cells during morphogenetic processes, including gastrulation and neurulation. PCP is maintained by two molecular modules, the global and the core modules, PRICKLE3 being part of the core module. Distinct complexes of the core module segregate to opposite sides of the cell, where they interact with the opposite complex in the neighboring cell at or near the adherents junctions. Involved in the organization of the basal body. Involved in cilia growth and positioning. Required for proper assembly, stability, and function of mitochondrial membrane ATP synthase (mitochondrial complex V). This chain is Prickle planar cell polarity protein 3, found in Mus musculus (Mouse).